Here is a 509-residue protein sequence, read N- to C-terminus: Activin receptor type-1 (509 aa).

The first 20 residues, 1–20, serve as a signal peptide directing secretion; sequence MVDGVMILPVLVMIAFPFPS. The Extracellular portion of the chain corresponds to 21 to 123; it reads MEDEKPKVNP…FPGTQNFHLE (103 aa). N-linked (GlcNAc...) asparagine glycosylation occurs at asparagine 102. Residues 124–146 traverse the membrane as a helical segment; it reads VGLIILSVVFAVCLLACLLGVAL. Residues 147 to 509 are Cytoplasmic-facing; it reads RKFKRRNQER…NSLDKLKTDC (363 aa). Residues 178–207 enclose the GS domain; it reads STLADLLDHSCTSGSGSGLPFLVQRTVARQ. The region spanning 208–502 is the Protein kinase domain; that stretch reads ITLLECVGKG…KTLTKIDNSL (295 aa). Residues 214 to 222 and lysine 235 contribute to the ATP site; that span reads VGKGRYGEV. The active-site Proton acceptor is aspartate 336. Position 501 is a phosphoserine (serine 501).

The protein belongs to the protein kinase superfamily. TKL Ser/Thr protein kinase family. TGFB receptor subfamily. In terms of assembly, interacts with FKBP1A. Interacts with FCHO1. Interacts with CLU. Interacts with type II receptors AMHR2 and ACVR2A. Interacts with BMP7. Interacts with BMP9. Interacts with BMP6 (when glycosylated); the interaction may induce HAMP expression. Interacts with TSC22D1/TSC-22. It depends on Mg(2+) as a cofactor. Requires Mn(2+) as cofactor.

Its subcellular location is the membrane. The enzyme catalyses L-threonyl-[receptor-protein] + ATP = O-phospho-L-threonyl-[receptor-protein] + ADP + H(+). The catalysed reaction is L-seryl-[receptor-protein] + ATP = O-phospho-L-seryl-[receptor-protein] + ADP + H(+). Functionally, bone morphogenetic protein (BMP) type I receptor that is involved in a wide variety of biological processes, including bone, heart, cartilage, nervous, and reproductive system development and regulation. As a type I receptor, forms heterotetrameric receptor complexes with the type II receptors AMHR2, ACVR2A ors ACVR2B. Upon binding of ligands such as BMP7 or BMP9 to the heteromeric complexes, type II receptors transphosphorylate ACVR1 intracellular domain. In turn, ACVR1 kinase domain is activated and subsequently phosphorylates SMAD1/5/8 proteins that transduce the signal. In addition to its role in mediating BMP pathway-specific signaling, suppresses TGFbeta/activin pathway signaling by interfering with the binding of activin to its type II receptor. Besides canonical SMAD signaling, can activate non-canonical signaling pathways. May promote the expression of HAMP, potentially via its interaction with BMP6. This Bos taurus (Bovine) protein is Activin receptor type-1 (ACVR1).